Here is a 298-residue protein sequence, read N- to C-terminus: N-acetylmuramic acid 6-phosphate etherase (298 aa).

Residues 54 to 217 (TIKAMKQGGR…STTVMIGLGK (164 aa)) enclose the SIS domain. The active-site Proton donor is glutamate 82. Glutamate 113 is a catalytic residue.

Belongs to the GCKR-like family. MurNAc-6-P etherase subfamily. In terms of assembly, homodimer.

It carries out the reaction N-acetyl-D-muramate 6-phosphate + H2O = N-acetyl-D-glucosamine 6-phosphate + (R)-lactate. Its pathway is amino-sugar metabolism; N-acetylmuramate degradation. Functionally, specifically catalyzes the cleavage of the D-lactyl ether substituent of MurNAc 6-phosphate, producing GlcNAc 6-phosphate and D-lactate. This chain is N-acetylmuramic acid 6-phosphate etherase, found in Halalkalibacterium halodurans (strain ATCC BAA-125 / DSM 18197 / FERM 7344 / JCM 9153 / C-125) (Bacillus halodurans).